A 121-amino-acid chain; its full sequence is Chorion protein S15 (121 aa).

An N-terminal signal peptide occupies residues 1-18 (MKYLFVCVSLALFAYISA).

This sequence belongs to the chorion protein S15/S18 family.

It is found in the secreted. In terms of biological role, chorion membrane (egg shell) protein; plays a role in protecting the egg from the environment. The polypeptide is Chorion protein S15 (Cp15) (Drosophila subobscura (Fruit fly)).